The following is a 418-amino-acid chain: Voltage-gated ClC-type chloride channel ClcB (418 aa).

10 helical membrane-spanning segments follow: residues 5–25, 54–74, 146–166, 168–188, 222–242, 258–278, 291–311, 316–336, 352–372, and 380–400; these read LLIA…FRHA, LLTP…WQKF, LWIA…PLAG, LFIA…PVII, ALII…LTLM, WQLA…PAVW, APPL…AVLA, GAPG…GMLY, LLLG…APIM, and MTGE…ASVI.

This sequence belongs to the chloride channel (TC 2.A.49) family. ClcB subfamily.

The protein resides in the cell inner membrane. Functionally, probably acts as an electrical shunt for an outwardly-directed proton pump that is linked to amino acid decarboxylation, as part of the extreme acid resistance (XAR) response. The sequence is that of Voltage-gated ClC-type chloride channel ClcB from Shigella boydii serotype 18 (strain CDC 3083-94 / BS512).